The following is a 191-amino-acid chain: COP9 signalosome complex subunit 8 (191 aa).

The PCI domain maps to 6–179; it reads MMAELDEKLL…VSLVPNEQQL (174 aa).

Belongs to the CSN8 family. In terms of assembly, component of the CSN complex, probably composed of cops1, cops2, cops3, cops4, cops5, cops6, cops7, cops8 and cops9.

It is found in the cytoplasm. It localises to the nucleus. Its function is as follows. Component of the COP9 signalosome complex (CSN), a complex involved in various cellular and developmental processes. The CSN complex is an essential regulator of the ubiquitin (Ubl) conjugation pathway by mediating the deneddylation of the cullin subunits of E3 ligase complexes, leading to modify the Ubl ligase activity. The protein is COP9 signalosome complex subunit 8 (cops8) of Danio rerio (Zebrafish).